We begin with the raw amino-acid sequence, 206 residues long: Uridine kinase (206 aa).

An ATP-binding site is contributed by 11 to 18 (GGTGSGKS).

Belongs to the uridine kinase family.

It is found in the cytoplasm. It catalyses the reaction uridine + ATP = UMP + ADP + H(+). It carries out the reaction cytidine + ATP = CMP + ADP + H(+). Its pathway is pyrimidine metabolism; CTP biosynthesis via salvage pathway; CTP from cytidine: step 1/3. It functions in the pathway pyrimidine metabolism; UMP biosynthesis via salvage pathway; UMP from uridine: step 1/1. The polypeptide is Uridine kinase (Clostridium botulinum (strain 657 / Type Ba4)).